The sequence spans 332 residues: Palmitoyltransferase ZDHHC15B (332 aa).

The Cytoplasmic portion of the chain corresponds to 1 to 14 (MALSRALRCCQRIF). Residues 15–35 (SWIPVIIISSVVLWSYYAYVF) traverse the membrane as a helical segment. Topologically, residues 36–50 (ELCFVTLSNNLERVT) are lumenal. The helical transmembrane segment at 51 to 71 (YLLIFHVCFIMFCWTYWKAIF) threads the bilayer. Over 72 to 166 (TPPSTPTKKF…NNCVGFSNYK (95 aa)) the chain is Cytoplasmic. The DHHC domain occupies 123 to 173 (RFCDRCQVIKPDRCHHCSVCETCVLKMDHHCPWVNNCVGFSNYKFFLLFLS). The Zn(2+) site is built by Cys125 and Cys128. Lys132 contributes to the substrate binding site. Zn(2+) contacts are provided by His138, Cys139, Cys142, Cys145, and His152. Residue Cys153 is the S-palmitoyl cysteine intermediate of the active site. Position 159 (Cys159) interacts with Zn(2+). A helical membrane pass occupies residues 167 to 187 (FFLLFLSYSMIYCVFIASTVF). Topologically, residues 188 to 204 (QYFLKFWVGDLPNGPAK) are lumenal. The helical transmembrane segment at 205–228 (FHVLFLLFVALMFFVSLMFLFGYH) threads the bilayer. Topologically, residues 229–332 (CWLVAKNRST…GSSLLIRTES (104 aa)) are cytoplasmic. The tract at residues 305–332 (EEKWVEDGGSDEESADENGSSLLIRTES) is disordered.

Belongs to the DHHC palmitoyltransferase family. In terms of processing, autopalmitoylated (in vitro).

It is found in the golgi apparatus membrane. The protein resides in the postsynaptic density. It carries out the reaction L-cysteinyl-[protein] + hexadecanoyl-CoA = S-hexadecanoyl-L-cysteinyl-[protein] + CoA. The catalysed reaction is L-cysteinyl-[protein] + tetradecanoyl-CoA = S-tetradecanoyl-L-cysteinyl-[protein] + CoA. It catalyses the reaction L-cysteinyl-[protein] + octadecanoyl-CoA = S-octadecanoyl-L-cysteinyl-[protein] + CoA. Palmitoyltransferase that catalyzes the addition of palmitate onto various protein substrates. Has no stringent fatty acid selectivity and in addition to palmitate can also transfer onto target proteins myristate from tetradecanoyl-CoA and stearate from octadecanoyl-CoA. May thereby regulate target proteins association and localization to membranes. In the nervous system, probably catalyzes the palmitoylation of synaptic proteins and is involved in the differentiation of dopaminergic neurons and the development of the diencephalon. The polypeptide is Palmitoyltransferase ZDHHC15B (zdhhc15b) (Danio rerio (Zebrafish)).